The chain runs to 230 residues: uncharacterized protein (230 aa).

7 consecutive transmembrane segments (helical) span residues 34–54 (FFAGSLLLATVGALLGLMNFQ), 56–76 (VVQYKWVFFIAEIVAFFGLMF), 87–107 (MLFAFTSLSGVTLVPLLGMVI), 111–131 (GLGAVWQALGMTTIVFGLMSV), 146–166 (MLFIALIVVVVCSLINLFLGS), 167–187 (PMFQVVIAGASAILFSLYIAY), and 205–225 (VSLYLDFLNVFISILQIIGIF).

This sequence belongs to the BI1 family.

It localises to the cell membrane. This is an uncharacterized protein from Helicobacter pylori (strain J99 / ATCC 700824) (Campylobacter pylori J99).